Here is a 72-residue protein sequence, read N- to C-terminus: Crustacean hyperglycemic hormone A (72 aa).

A Pyrrolidone carboxylic acid modification is found at Gln-1. Phe-3 is subject to D-phenylalanine; in form CHHA-II. Cystine bridges form between Cys-7–Cys-43, Cys-23–Cys-39, and Cys-26–Cys-52. At Val-72 the chain carries Valine amide.

Post-translationally, stereoinversion of L-Phe (in CHHA-I) to D-Phe (in CHHA-II).

The protein resides in the secreted. Hormone found in the sinus gland of isopods and decapods which controls the blood sugar level. Has a secretagogue action over the amylase released from the midgut gland. May act as a stress hormone and may be involved in the control of molting and reproduction. The polypeptide is Crustacean hyperglycemic hormone A (Cherax destructor (Common yabby crayfish)).